Here is a 419-residue protein sequence, read N- to C-terminus: UDP-N-acetylglucosamine 1-carboxyvinyltransferase (419 aa).

22-23 (KN) provides a ligand contact to phosphoenolpyruvate. Arg95 contributes to the UDP-N-acetyl-alpha-D-glucosamine binding site. Cys119 acts as the Proton donor in catalysis. A 2-(S-cysteinyl)pyruvic acid O-phosphothioketal modification is found at Cys119. UDP-N-acetyl-alpha-D-glucosamine-binding positions include 164-167 (KVSV), Asp308, and Ile330.

Belongs to the EPSP synthase family. MurA subfamily.

Its subcellular location is the cytoplasm. The catalysed reaction is phosphoenolpyruvate + UDP-N-acetyl-alpha-D-glucosamine = UDP-N-acetyl-3-O-(1-carboxyvinyl)-alpha-D-glucosamine + phosphate. Its pathway is cell wall biogenesis; peptidoglycan biosynthesis. In terms of biological role, cell wall formation. Adds enolpyruvyl to UDP-N-acetylglucosamine. In Rickettsia akari (strain Hartford), this protein is UDP-N-acetylglucosamine 1-carboxyvinyltransferase.